The following is a 262-amino-acid chain: 3-deoxy-manno-octulosonate cytidylyltransferase (262 aa).

Belongs to the KdsB family.

The protein resides in the cytoplasm. It catalyses the reaction 3-deoxy-alpha-D-manno-oct-2-ulosonate + CTP = CMP-3-deoxy-beta-D-manno-octulosonate + diphosphate. It participates in nucleotide-sugar biosynthesis; CMP-3-deoxy-D-manno-octulosonate biosynthesis; CMP-3-deoxy-D-manno-octulosonate from 3-deoxy-D-manno-octulosonate and CTP: step 1/1. The protein operates within bacterial outer membrane biogenesis; lipopolysaccharide biosynthesis. Its function is as follows. Activates KDO (a required 8-carbon sugar) for incorporation into bacterial lipopolysaccharide in Gram-negative bacteria. The protein is 3-deoxy-manno-octulosonate cytidylyltransferase of Blochmanniella pennsylvanica (strain BPEN).